The following is a 434-amino-acid chain: Glutamate-1-semialdehyde 2,1-aminomutase 1 (434 aa).

Lys-270 carries the N6-(pyridoxal phosphate)lysine modification.

The protein belongs to the class-III pyridoxal-phosphate-dependent aminotransferase family. HemL subfamily. Homodimer. Requires pyridoxal 5'-phosphate as cofactor.

The protein localises to the cytoplasm. The catalysed reaction is (S)-4-amino-5-oxopentanoate = 5-aminolevulinate. It participates in porphyrin-containing compound metabolism; protoporphyrin-IX biosynthesis; 5-aminolevulinate from L-glutamyl-tRNA(Glu): step 2/2. The protein is Glutamate-1-semialdehyde 2,1-aminomutase 1 of Bacillus cereus (strain ATCC 10987 / NRS 248).